The chain runs to 1086 residues: Sterol regulatory element-binding protein cleavage-activating protein (1086 aa).

Over 1-35 the chain is Cytoplasmic; the sequence is MRIFTLGKGRISRGYARQVNPSLFAKYSYCIANNP. Residues 36-56 traverse the membrane as a helical segment; that stretch reads WYFILVFTLLSITGIYSSLVA. At 57–229 the chain is on the lumenal side; it reads YQQSLYDQSL…TVVARIPDLT (173 aa). N-linked (GlcNAc...) asparagine glycans are attached at residues N94 and N168. The helical transmembrane segment at 230–250 threads the bilayer; it reads VIYRWYLWVGFGVGLFAYLYL. One can recognise an SSD domain in the interval 233 to 391; it reads RWYLWVGFGV…GSFFLAVLSV (159 aa). The Cytoplasmic portion of the chain corresponds to 251 to 265; it reads SLVRLHDIRAKFGLT. A helical transmembrane segment spans residues 266-286; it reads ATIFIQSGTAYFSTCSLLYFF. Over 287–290 the chain is Lumenal; it reads ERTG. A helical membrane pass occupies residues 291–311; sequence PICPWPMAYYIIIFMDIENSF. Residues 312-337 are Cytoplasmic-facing; it reads RLLRAVIASPQTKRVPSRIMEGFSST. Residues 338 to 358 traverse the membrane as a helical segment; it reads IIASFSSLLKKLLTLFVLSFF. Topologically, residues 359-367 are lumenal; sequence VYPLVQEFC. The chain crosses the membrane as a helical span at residues 368 to 388; that stretch reads LFLACSFVVSFLLHGSFFLAV. The Cytoplasmic segment spans residues 389–422; the sequence is LSVDIRRLELQDFLDSNSSNRNSKWWVPYLEYVR. Residues 396 to 401 carry the ER export signal motif; sequence LELQDF. A helical transmembrane segment spans residues 423 to 443; sequence FMWSPWIIDNLGTVSFHMYVI. At 444 to 544 the chain is on the lumenal side; that stretch reads YLQLQSSTDI…FHDRRVWRWS (101 aa). N454 is a glycosylation site (N-linked (GlcNAc...) asparagine). The chain crosses the membrane as a helical span at residues 545 to 565; the sequence is TFFSILFAIDFAVGLLVKALL. Over 566 to 1086 the chain is Cytoplasmic; sequence RGWSDHDELS…QRKRSGTIGC (521 aa). WD repeat units lie at residues 593–632, 637–675, 680–727, 736–776, and 963–1009; these read HHQL…TKLV, QMPR…LMLQ, CKPN…EGAD, LSSP…WSPK, and GHYN…KKHR. Positions 640 to 1086 are interaction with sre1; it reads RTLKAIALDP…QRKRSGTIGC (447 aa).

The protein belongs to the WD repeat SCAP family. Forms a tight complex with scp1, composed of 4 copies of scp1 and 4 copies of sre1.

The protein resides in the endoplasmic reticulum membrane. The protein localises to the golgi apparatus membrane. Escort protein required for sre1 processing at low sterol as well as oxygen levels. May regulate export of the scp1/sre1 complex from the ER at low sterol or oxygen levels. 4-methyl sterols bound to scp1 may mask an ER export signal in scp1 leading to retention of the complex in the ER. Release of 4-methyl sterols may trigger a conformational change in the SSD domain of scp1 unmasking the ER export signal leading to recruitment into COPII-coated vesicles, transport to the Golgi complex, proteolytic cleavage of sre1 in the Golgi, release of the transcription factor fragment of sre1 from the membrane, its import into the nucleus and up-regulation of genes required for ergosterol biosynthesis as well as anaerobic growth. Binds 4-methyl sterols. This is Sterol regulatory element-binding protein cleavage-activating protein from Schizosaccharomyces pombe (strain 972 / ATCC 24843) (Fission yeast).